We begin with the raw amino-acid sequence, 57 residues long: Large ribosomal subunit protein bL32 (57 aa).

The tract at residues 1-23 (MAVPKKRTSKTRTNRRRAQKKAR) is disordered.

It belongs to the bacterial ribosomal protein bL32 family.

This Natranaerobius thermophilus (strain ATCC BAA-1301 / DSM 18059 / JW/NM-WN-LF) protein is Large ribosomal subunit protein bL32.